The primary structure comprises 143 residues: D-aminoacyl-tRNA deacylase (143 aa).

Residues 135–136 carry the Gly-cisPro motif, important for rejection of L-amino acids motif; it reads GP.

The protein belongs to the DTD family. As to quaternary structure, homodimer.

The protein resides in the cytoplasm. The enzyme catalyses glycyl-tRNA(Ala) + H2O = tRNA(Ala) + glycine + H(+). It carries out the reaction a D-aminoacyl-tRNA + H2O = a tRNA + a D-alpha-amino acid + H(+). Its function is as follows. An aminoacyl-tRNA editing enzyme that deacylates mischarged D-aminoacyl-tRNAs. Also deacylates mischarged glycyl-tRNA(Ala), protecting cells against glycine mischarging by AlaRS. Acts via tRNA-based rather than protein-based catalysis; rejects L-amino acids rather than detecting D-amino acids in the active site. By recycling D-aminoacyl-tRNA to D-amino acids and free tRNA molecules, this enzyme counteracts the toxicity associated with the formation of D-aminoacyl-tRNA entities in vivo and helps enforce protein L-homochirality. The sequence is that of D-aminoacyl-tRNA deacylase from Mycolicibacterium smegmatis (strain ATCC 700084 / mc(2)155) (Mycobacterium smegmatis).